We begin with the raw amino-acid sequence, 510 residues long: Protein phosphatase EYA3 (510 aa).

Disordered regions lie at residues 1–32 (MQEP…SNLS) and 175–233 (YQTE…DASS). Over residues 7–16 (QTLSQVNNPD) the composition is skewed to polar residues. Residues 192–203 (LPSDSSASPPLS) are compositionally biased toward low complexity. Phosphoserine occurs at positions 199 and 203. The active-site Nucleophile is the Asp246. 2 residues coordinate Mg(2+): Asp246 and Asp248. Asp248 (proton donor) is an active-site residue. Phosphoserine is present on residues Ser375 and Ser409. Asp474 lines the Mg(2+) pocket.

It belongs to the HAD-like hydrolase superfamily. EYA family. Interacts with SIX1 and DACH1, and probably SIX2, SIX4 and SIX5. It depends on Mg(2+) as a cofactor. In terms of processing, ser-203 phosphorylation is required for localization at sites of DNA damage and directing interaction with H2AX. As to expression, expressed in branchial arches, CNS and developing eye.

The protein resides in the cytoplasm. It localises to the nucleus. It catalyses the reaction O-phospho-L-tyrosyl-[protein] + H2O = L-tyrosyl-[protein] + phosphate. Functionally, tyrosine phosphatase that specifically dephosphorylates 'Tyr-142' of histone H2AX (H2AXY142ph). 'Tyr-142' phosphorylation of histone H2AX plays a central role in DNA repair and acts as a mark that distinguishes between apoptotic and repair responses to genotoxic stress. Promotes efficient DNA repair by dephosphorylating H2AX, promoting the recruitment of DNA repair complexes containing MDC1. Its function as histone phosphatase probably explains its role in transcription regulation during organogenesis. The phosphatase activity has been shown in vitro. Coactivates SIX1. Seems to coactivate SIX2, SIX4 and SIX5. The repression of precursor cell proliferation in myoblasts by SIX1 is switched to activation through recruitment of EYA3 to the SIX1-DACH1 complex and seems to be dependent on EYA3 phosphatase activity. May be involved in development of the eye. May play a role in mediating the induction and differentiation of cranial placodes. This is Protein phosphatase EYA3 (Eya3) from Mus musculus (Mouse).